Here is a 63-residue protein sequence, read N- to C-terminus: MPKLRVTQIASVAGRKPGQKETLIGLGLNKIGRTRVLEDTPSIRGMTRKVAHLIQVEETNEAE.

The protein belongs to the universal ribosomal protein uL30 family. In terms of assembly, part of the 50S ribosomal subunit.

The protein is Large ribosomal subunit protein uL30 of Granulibacter bethesdensis (strain ATCC BAA-1260 / CGDNIH1).